Here is a 279-residue protein sequence, read N- to C-terminus: Secreted RxLR effector protein 90 (279 aa).

An N-terminal signal peptide occupies residues M1–T19. Residues R29–R46 carry the RxLR-dEER motif. 2 disordered regions span residues R29–H53 and A135–G176. Residue N37 is glycosylated (N-linked (GlcNAc...) asparagine). The segment covering A135–S146 has biased composition (low complexity). Residues L147–A163 are compositionally biased toward polar residues. Gly residues predominate over residues Q166–G176. Residue N217 is glycosylated (N-linked (GlcNAc...) asparagine).

Belongs to the RxLR effector family.

Its subcellular location is the secreted. The protein localises to the host cell membrane. Functionally, secreted effector that completely suppresses the host cell death induced by cell death-inducing proteins. The chain is Secreted RxLR effector protein 90 from Plasmopara viticola (Downy mildew of grapevine).